Consider the following 100-residue polypeptide: Small ribosomal subunit protein uS14c (100 aa).

This sequence belongs to the universal ribosomal protein uS14 family. In terms of assembly, part of the 30S ribosomal subunit.

The protein localises to the plastid. The protein resides in the chloroplast. Its function is as follows. Binds 16S rRNA, required for the assembly of 30S particles. The chain is Small ribosomal subunit protein uS14c from Cyanidium caldarium (Red alga).